Reading from the N-terminus, the 348-residue chain is Heat-inducible transcription repressor HrcA (348 aa).

This sequence belongs to the HrcA family.

In terms of biological role, negative regulator of class I heat shock genes (grpE-dnaK-dnaJ and groELS operons). Prevents heat-shock induction of these operons. This is Heat-inducible transcription repressor HrcA from Pelotomaculum thermopropionicum (strain DSM 13744 / JCM 10971 / SI).